The primary structure comprises 145 residues: Large ribosomal subunit protein uL16 (145 aa).

The protein belongs to the universal ribosomal protein uL16 family. As to quaternary structure, part of the 50S ribosomal subunit.

Functionally, binds 23S rRNA and is also seen to make contacts with the A and possibly P site tRNAs. The polypeptide is Large ribosomal subunit protein uL16 (Shouchella clausii (strain KSM-K16) (Alkalihalobacillus clausii)).